The primary structure comprises 181 residues: Isopentenyl-diphosphate Delta-isomerase (181 aa).

Mn(2+) contacts are provided by His25 and His32. Positions 30–164 (PLHLAFSCWL…PWAFSPWMVM (135 aa)) constitute a Nudix hydrolase domain. The active site involves Cys67. Cys67 is a Mg(2+) binding site. His69 provides a ligand contact to Mn(2+). Glu87 serves as a coordination point for Mg(2+). Positions 114 and 116 each coordinate Mn(2+). Glu116 is a catalytic residue.

It belongs to the IPP isomerase type 1 family. As to quaternary structure, homodimer. Requires Mg(2+) as cofactor. It depends on Mn(2+) as a cofactor.

It localises to the cytoplasm. It catalyses the reaction isopentenyl diphosphate = dimethylallyl diphosphate. The protein operates within isoprenoid biosynthesis; dimethylallyl diphosphate biosynthesis; dimethylallyl diphosphate from isopentenyl diphosphate: step 1/1. Catalyzes the 1,3-allylic rearrangement of the homoallylic substrate isopentenyl (IPP) to its highly electrophilic allylic isomer, dimethylallyl diphosphate (DMAPP). This Salmonella choleraesuis (strain SC-B67) protein is Isopentenyl-diphosphate Delta-isomerase.